The sequence spans 516 residues: Histidine ammonia-lyase 1 (516 aa).

Residues 147–149 (SSG) constitute a cross-link (5-imidazolinone (Ser-Gly)). Residue Ser148 is modified to 2,3-didehydroalanine (Ser).

The protein belongs to the PAL/histidase family. In terms of processing, contains an active site 4-methylidene-imidazol-5-one (MIO), which is formed autocatalytically by cyclization and dehydration of residues Ser-Ser-Gly.

It localises to the cytoplasm. The catalysed reaction is L-histidine = trans-urocanate + NH4(+). It functions in the pathway amino-acid degradation; L-histidine degradation into L-glutamate; N-formimidoyl-L-glutamate from L-histidine: step 1/3. In Fusobacterium nucleatum subsp. nucleatum (strain ATCC 25586 / DSM 15643 / BCRC 10681 / CIP 101130 / JCM 8532 / KCTC 2640 / LMG 13131 / VPI 4355), this protein is Histidine ammonia-lyase 1 (hutH1).